The chain runs to 192 residues: MAAAKAGASAPEAAGSAEAPLQYSLLLQHLVGDKRQPRLLEPGSLGGIPSPAKSEEQKMIERAMESCAFKAVLACVGGFVLGGAFGVFTAGIDTNVGFDPKDPYRTPTAREVLKDMGQRGMSYAKNFAIVGAMFSCTECLVESYRGKSDWKNSVISGCITGGAIGFRAGVKAGAIGCGGFAAFSAAIDYYLR.

2 disulfide bridges follow: C67-C139 and C158-C177. Transmembrane regions (helical) follow at residues 72–92, 123–141, and 168–188; these read VLAC…TAGI, YAKN…ECLV, and AGVK…AAID.

It belongs to the Tim17/Tim22/Tim23 family. As to quaternary structure, component of the TIM22 complex, whose core is composed of TIMM22, associated with peripheral protein FXC1/TIMM10B and the 70 kDa heterohexamer. In most cases, the 70 kDa complex is composed of TIMM9 and TIMM10 (TIMM10A or TIMM10B). A small fraction of the 70 kDa complex is composed of TIMM8 (TIMM8A/DDP1 or TIMM8B/DDP2) and TIMM13. The TIM22 complex also contains AGK and TIMM29. Interacts directly with TIMM9, TIMM10A and FXC1/TIMM10B. Interacts (when oxidized) with TIMM29; interaction is direct. In terms of processing, disulfide bonds promote efficient assembly of the TIM22 complex.

The protein localises to the mitochondrion inner membrane. In terms of biological role, essential core component of the TIM22 complex, a complex that mediates the import and insertion of multi-pass transmembrane proteins into the mitochondrial inner membrane. In the TIM22 complex, it constitutes the voltage-activated and signal-gated channel. Forms a twin-pore translocase that uses the membrane potential as external driving force in 2 voltage-dependent steps. This chain is Mitochondrial import inner membrane translocase subunit Tim22 (Timm22), found in Rattus norvegicus (Rat).